A 75-amino-acid chain; its full sequence is Protein RALF-like 9 (75 aa).

Positions 1–28 (MGMSKSIKVILSLALVVFLALAATKVEA) are cleaved as a signal peptide. Cystine bridges form between Cys-46/Cys-54 and Cys-66/Cys-72.

This sequence belongs to the plant rapid alkalinization factor (RALF) family.

The protein localises to the secreted. Functionally, cell signaling peptide that may regulate plant stress, growth, and development. Mediates a rapid alkalinization of extracellular space by mediating a transient increase in the cytoplasmic Ca(2+) concentration leading to a calcium-dependent signaling events through a cell surface receptor and a concomitant activation of some intracellular mitogen-activated protein kinases. The chain is Protein RALF-like 9 (RALFL9) from Arabidopsis thaliana (Mouse-ear cress).